A 359-amino-acid polypeptide reads, in one-letter code: Biotin synthase (359 aa).

The disordered stretch occupies residues 1 to 22 (MQSTPLNFVPNAAKAPVTPGQA). The Radical SAM core domain occupies 58–285 (NAVQLSTLLS…KAMVRLSAGR (228 aa)). [4Fe-4S] cluster is bound by residues cysteine 73, cysteine 77, and cysteine 80. Residues cysteine 117, cysteine 148, cysteine 208, and arginine 280 each coordinate [2Fe-2S] cluster.

The protein belongs to the radical SAM superfamily. Biotin synthase family. As to quaternary structure, homodimer. [4Fe-4S] cluster serves as cofactor. The cofactor is [2Fe-2S] cluster.

It catalyses the reaction (4R,5S)-dethiobiotin + (sulfur carrier)-SH + 2 reduced [2Fe-2S]-[ferredoxin] + 2 S-adenosyl-L-methionine = (sulfur carrier)-H + biotin + 2 5'-deoxyadenosine + 2 L-methionine + 2 oxidized [2Fe-2S]-[ferredoxin]. It participates in cofactor biosynthesis; biotin biosynthesis; biotin from 7,8-diaminononanoate: step 2/2. Its function is as follows. Catalyzes the conversion of dethiobiotin (DTB) to biotin by the insertion of a sulfur atom into dethiobiotin via a radical-based mechanism. The polypeptide is Biotin synthase (Ralstonia pickettii (strain 12J)).